We begin with the raw amino-acid sequence, 58 residues long: Conotoxin Im5.4 (58 aa).

An N-terminal signal peptide occupies residues 1 to 18 (MRCLPVVVFLLLLLSAAA). A propeptide spanning residues 19–28 (APGVGSKTER) is cleaved from the precursor.

It belongs to the conotoxin T superfamily. Contains 2 disulfide bonds that can be either 'C1-C3, C2-C4' or 'C1-C4, C2-C3', since these disulfide connectivities have been observed for conotoxins with cysteine framework V (for examples, see AC P0DQQ7 and AC P81755). In terms of tissue distribution, expressed by the venom duct.

It localises to the secreted. Probable neurotoxin. In Conus imperialis (Imperial cone), this protein is Conotoxin Im5.4.